The chain runs to 312 residues: Ribosomal protein L11 methyltransferase (312 aa).

Residues Thr162, Gly183, Asp205, and Asn248 each coordinate S-adenosyl-L-methionine.

The protein belongs to the methyltransferase superfamily. PrmA family.

The protein resides in the cytoplasm. The catalysed reaction is L-lysyl-[protein] + 3 S-adenosyl-L-methionine = N(6),N(6),N(6)-trimethyl-L-lysyl-[protein] + 3 S-adenosyl-L-homocysteine + 3 H(+). Its function is as follows. Methylates ribosomal protein L11. In Exiguobacterium sp. (strain ATCC BAA-1283 / AT1b), this protein is Ribosomal protein L11 methyltransferase.